Reading from the N-terminus, the 490-residue chain is B3 domain-containing protein REM14 (490 aa).

DNA-binding regions (TF-B3) lie at residues 3-95, 130-226, and 236-333; these read NQHF…LGPS, CFSA…LPKG, and CFVA…LSNE. The segment at 343–367 is disordered; it reads NEVESLSTDQESHEESSHNEKISRR. Over residues 352-364 the composition is skewed to basic and acidic residues; sequence QESHEESSHNEKI. Residues 387-484 constitute a DNA-binding region (TF-B3 4); the sequence is FVTLNLTPYN…TSCVLKFCSK (98 aa).

Its subcellular location is the nucleus. This chain is B3 domain-containing protein REM14 (REM14), found in Arabidopsis thaliana (Mouse-ear cress).